The primary structure comprises 183 residues: Gene BABR protein 2 (183 aa).

This Babesia bovis protein is Gene BABR protein 2.